We begin with the raw amino-acid sequence, 96 residues long: Co-chaperonin GroES (96 aa).

The protein belongs to the GroES chaperonin family. Heptamer of 7 subunits arranged in a ring. Interacts with the chaperonin GroEL.

It localises to the cytoplasm. Functionally, together with the chaperonin GroEL, plays an essential role in assisting protein folding. The GroEL-GroES system forms a nano-cage that allows encapsulation of the non-native substrate proteins and provides a physical environment optimized to promote and accelerate protein folding. GroES binds to the apical surface of the GroEL ring, thereby capping the opening of the GroEL channel. This chain is Co-chaperonin GroES, found in Shewanella baltica (strain OS223).